The sequence spans 716 residues: 1,4-alpha-glucan branching enzyme GlgB (716 aa).

Aspartate 399 serves as the catalytic Nucleophile. Residue glutamate 452 is the Proton donor of the active site.

It belongs to the glycosyl hydrolase 13 family. GlgB subfamily. As to quaternary structure, monomer.

It catalyses the reaction Transfers a segment of a (1-&gt;4)-alpha-D-glucan chain to a primary hydroxy group in a similar glucan chain.. It functions in the pathway glycan biosynthesis; glycogen biosynthesis. Catalyzes the formation of the alpha-1,6-glucosidic linkages in glycogen by scission of a 1,4-alpha-linked oligosaccharide from growing alpha-1,4-glucan chains and the subsequent attachment of the oligosaccharide to the alpha-1,6 position. This chain is 1,4-alpha-glucan branching enzyme GlgB, found in Rhodopseudomonas palustris (strain HaA2).